The sequence spans 463 residues: Glucagon-like peptide 1 receptor (463 aa).

Residues 1–21 (MAVTPSLLRLALLLLGAVGRA) form the signal peptide. Topologically, residues 22-139 (GPRPQGATVS…KQGERNSPEE (118 aa)) are extracellular. Cystine bridges form between Cys46-Cys71, Cys62-Cys104, and Cys85-Cys126. N-linked (GlcNAc...) asparagine glycans are attached at residues Asn63, Asn82, and Asn115. A helical membrane pass occupies residues 140–164 (QLLSLYIIYTVGYALSFSALVIASA). The Cytoplasmic portion of the chain corresponds to 165-175 (ILVSFRHLHCT). A helical transmembrane segment spans residues 176–201 (RNYIHLNLFASFILRALSVFIKDAAL). At 202–227 (KWMYSTAAQQHQWDGLLSYQDSLGCR) the chain is on the extracellular side. Cysteines 226 and 296 form a disulfide. Residues 228 to 251 (LVFLLMQYCVAANYYWLLVEGVYL) form a helical membrane-spanning segment. Residues 252-265 (YTLLAFSVFSEQRI) are Cytoplasmic-facing. A helical transmembrane segment spans residues 266–290 (FKLYLSIGWGVPLLFVIPWGIVKYL). Topologically, residues 291-305 (YEDEGCWTRNSNMNY) are extracellular. Residues 306 to 328 (WLIIRLPILFAIGVNFLVFIRVI) traverse the membrane as a helical segment. Residues 329–348 (CIVIAKLKANLMCKTDIKCR) lie on the Cytoplasmic side of the membrane. The residue at position 341 (Cys341) is an ADP-ribosylcysteine. The residue at position 348 (Arg348) is an ADP-ribosylarginine. Residues 349–370 (LAKSTLTLIPLLGTHEVIFAFV) traverse the membrane as a helical segment. Positions 352 to 355 (STLT) are important for allosteric inhibitor binding. The Extracellular segment spans residues 371 to 383 (MDEHARGTLRFVK). Residues 384–404 (LFTELSFTSFQGFMVAVLYCF) traverse the membrane as a helical segment. At 405 to 463 (VNNEVQMEFRKSWERWRLERLNIQRDSSMKPLKCPTSSVSSGATVGSSVYAATCQNSCS) the chain is on the cytoplasmic side.

The protein belongs to the G-protein coupled receptor 2 family. As to quaternary structure, may form homodimers and heterodimers with GIPR. Post-translationally, N-glycosylation enhances cell surface expression and lengthens receptor half-life by preventing degradation in the ER. In terms of tissue distribution, pancreatic islets, stomach, lung, rat insulinoma cell line.

It localises to the cell membrane. G-protein coupled receptor for glucagon-like peptide 1 (GLP-1). Ligand binding triggers activation of a signaling cascade that leads to the activation of adenylyl cyclase and increased intracellular cAMP levels. Plays a role in regulating insulin secretion in response to GLP-1. This chain is Glucagon-like peptide 1 receptor (Glp1r), found in Rattus norvegicus (Rat).